We begin with the raw amino-acid sequence, 92 residues long: DNA/RNA-binding protein Alba (92 aa).

An N6-acetyllysine modification is found at K11.

The protein belongs to the histone-like Alba family. Acetylated. Acetylation at Lys-11 decreases DNA-binding affinity.

The protein resides in the cytoplasm. It is found in the chromosome. In terms of biological role, binds double-stranded DNA tightly but without sequence specificity. Involved in DNA compaction. The polypeptide is DNA/RNA-binding protein Alba (Pyrobaculum islandicum (strain DSM 4184 / JCM 9189 / GEO3)).